A 315-amino-acid chain; its full sequence is 2,3-dihydroxyphenylpropionate/2,3-dihydroxicinnamic acid 1,2-dioxygenase (315 aa).

Histidine 118 acts as the Proton donor in catalysis. The active-site Proton acceptor is the histidine 182.

Belongs to the LigB/MhpB extradiol dioxygenase family. Homotetramer. Fe(2+) serves as cofactor.

It carries out the reaction 3-(2,3-dihydroxyphenyl)propanoate + O2 = (2Z,4E)-2-hydroxy-6-oxonona-2,4-dienedioate + H(+). The catalysed reaction is (2E)-3-(2,3-dihydroxyphenyl)prop-2-enoate + O2 = (2Z,4E,7E)-2-hydroxy-6-oxonona-2,4,7-trienedioate + H(+). It functions in the pathway aromatic compound metabolism; 3-phenylpropanoate degradation. Catalyzes the non-heme iron(II)-dependent oxidative cleavage of 2,3-dihydroxyphenylpropionic acid and 2,3-dihydroxicinnamic acid into 2-hydroxy-6-ketononadienedioate and 2-hydroxy-6-ketononatrienedioate, respectively. The protein is 2,3-dihydroxyphenylpropionate/2,3-dihydroxicinnamic acid 1,2-dioxygenase of Mycolicibacterium gilvum (strain PYR-GCK) (Mycobacterium gilvum (strain PYR-GCK)).